A 178-amino-acid polypeptide reads, in one-letter code: Mediator of RNA polymerase II transcription subunit 30 (178 aa).

A disordered region spans residues 1–22; it reads MSTPPLAASGMAPGPFAGPQAQ. Residue serine 2 is modified to N-acetylserine. The span at 10–22 shows a compositional bias: low complexity; that stretch reads GMAPGPFAGPQAQ. Coiled-coil stretches lie at residues 70-94 and 133-173; these read TYQD…KLRL and RFAS…INAM.

Belongs to the Mediator complex subunit 30 family. As to quaternary structure, component of the Mediator complex, which is composed of MED1, MED4, MED6, MED7, MED8, MED9, MED10, MED11, MED12, MED13, MED13L, MED14, MED15, MED16, MED17, MED18, MED19, MED20, MED21, MED22, MED23, MED24, MED25, MED26, MED27, MED29, MED30, MED31, CCNC, CDK8 and CDC2L6/CDK11. The MED12, MED13, CCNC and CDK8 subunits form a distinct module termed the CDK8 module. Mediator containing the CDK8 module is less active than Mediator lacking this module in supporting transcriptional activation. Individual preparations of the Mediator complex lacking one or more distinct subunits have been variously termed ARC, CRSP, DRIP, PC2, SMCC and TRAP. In terms of tissue distribution, expressed in brain, heart, kidney, liver, lung, pancreas, placenta and skeletal muscle.

It is found in the nucleus. In terms of biological role, component of the Mediator complex, a coactivator involved in the regulated transcription of nearly all RNA polymerase II-dependent genes. Mediator functions as a bridge to convey information from gene-specific regulatory proteins to the basal RNA polymerase II transcription machinery. Mediator is recruited to promoters by direct interactions with regulatory proteins and serves as a scaffold for the assembly of a functional preinitiation complex with RNA polymerase II and the general transcription factors. This is Mediator of RNA polymerase II transcription subunit 30 (MED30) from Homo sapiens (Human).